The sequence spans 93 residues: Neutrophil cationic peptide 1 type B (93 aa).

The N-terminal stretch at 1 to 19 (MRTVPLFAACLLLTLMAQA) is a signal peptide. Positions 20-62 (EPLPRAADHSDTKMKGDREDHVAVISFWEEESTSLQDAGAGAG) are excised as a propeptide. Intrachain disulfides connect Cys-65-Cys-93, Cys-67-Cys-82, and Cys-72-Cys-92.

Belongs to the alpha-defensin family. In terms of tissue distribution, bone marrow.

The protein localises to the secreted. Its function is as follows. Has antibiotic, anti-fungi and antiviral activity. The polypeptide is Neutrophil cationic peptide 1 type B (Cavia porcellus (Guinea pig)).